The primary structure comprises 393 residues: NAD(P)H-quinone oxidoreductase subunit H, chloroplastic (393 aa).

Belongs to the complex I 49 kDa subunit family. As to quaternary structure, NDH is composed of at least 16 different subunits, 5 of which are encoded in the nucleus.

Its subcellular location is the plastid. It is found in the chloroplast thylakoid membrane. It catalyses the reaction a plastoquinone + NADH + (n+1) H(+)(in) = a plastoquinol + NAD(+) + n H(+)(out). The catalysed reaction is a plastoquinone + NADPH + (n+1) H(+)(in) = a plastoquinol + NADP(+) + n H(+)(out). Its function is as follows. NDH shuttles electrons from NAD(P)H:plastoquinone, via FMN and iron-sulfur (Fe-S) centers, to quinones in the photosynthetic chain and possibly in a chloroplast respiratory chain. The immediate electron acceptor for the enzyme in this species is believed to be plastoquinone. Couples the redox reaction to proton translocation, and thus conserves the redox energy in a proton gradient. In Sorghum bicolor (Sorghum), this protein is NAD(P)H-quinone oxidoreductase subunit H, chloroplastic.